The sequence spans 407 residues: Imidazolonepropionase (407 aa).

Fe(3+) contacts are provided by His68 and His70. Residues His68 and His70 each coordinate Zn(2+). Residues Arg77, Tyr140, and His173 each contribute to the 4-imidazolone-5-propanoate site. Tyr140 is an N-formimidoyl-L-glutamate binding site. His238 contributes to the Fe(3+) binding site. Position 238 (His238) interacts with Zn(2+). 4-imidazolone-5-propanoate is bound at residue Gln241. Asp313 lines the Fe(3+) pocket. Asp313 provides a ligand contact to Zn(2+). Asn315 and Gly317 together coordinate N-formimidoyl-L-glutamate. Thr318 is a binding site for 4-imidazolone-5-propanoate.

The protein belongs to the metallo-dependent hydrolases superfamily. HutI family. Requires Zn(2+) as cofactor. It depends on Fe(3+) as a cofactor.

It localises to the cytoplasm. The enzyme catalyses 4-imidazolone-5-propanoate + H2O = N-formimidoyl-L-glutamate. Its pathway is amino-acid degradation; L-histidine degradation into L-glutamate; N-formimidoyl-L-glutamate from L-histidine: step 3/3. In terms of biological role, catalyzes the hydrolytic cleavage of the carbon-nitrogen bond in imidazolone-5-propanoate to yield N-formimidoyl-L-glutamate. It is the third step in the universal histidine degradation pathway. This is Imidazolonepropionase from Burkholderia ambifaria (strain MC40-6).